The chain runs to 469 residues: Cysteine--tRNA ligase (469 aa).

Cys-33 serves as a coordination point for Zn(2+). A 'HIGH' region motif is present at residues 35–45 (ATVQGLPHIGH). Cys-211, His-236, and Glu-240 together coordinate Zn(2+). The 'KMSKS' region motif lies at 267–271 (KMSKS). An ATP-binding site is contributed by Lys-270.

It belongs to the class-I aminoacyl-tRNA synthetase family. Monomer. The cofactor is Zn(2+).

It localises to the cytoplasm. The catalysed reaction is tRNA(Cys) + L-cysteine + ATP = L-cysteinyl-tRNA(Cys) + AMP + diphosphate. The protein is Cysteine--tRNA ligase (cysS) of Mycobacterium bovis (strain ATCC BAA-935 / AF2122/97).